A 569-amino-acid polypeptide reads, in one-letter code: Glutamate--tRNA ligase, chloroplastic/mitochondrial (569 aa).

Residue 59–61 (RFA) participates in L-glutamate binding. The 'HIGH' region motif lies at 62 to 72 (PSPTGNLHVGG). His-69 contributes to the ATP binding site. L-glutamate-binding positions include Glu-95, 247–251 (YNFCV), and Arg-265. Residues Glu-268 and 303–307 (KLSKR) contribute to the ATP site. The short motif at 303–307 (KLSKR) is the 'KMSKS' region element.

It belongs to the class-I aminoacyl-tRNA synthetase family. Glutamate--tRNA ligase type 1 subfamily.

It localises to the plastid. The protein resides in the chloroplast. Its subcellular location is the mitochondrion. The enzyme catalyses tRNA(Glu) + L-glutamate + ATP = L-glutamyl-tRNA(Glu) + AMP + diphosphate. Its function is as follows. Catalyzes the attachment of glutamate to tRNA(Glu) in a two-step reaction: glutamate is first activated by ATP to form Glu-AMP and then transferred to the acceptor end of tRNA(Glu). This is Glutamate--tRNA ligase, chloroplastic/mitochondrial from Nicotiana tabacum (Common tobacco).